We begin with the raw amino-acid sequence, 204 residues long: Urease accessory protein UreG (204 aa).

GTP is bound at residue 11–18 (GPVGAGKH).

This sequence belongs to the SIMIBI class G3E GTPase family. UreG subfamily. Homodimer. UreD, UreF and UreG form a complex that acts as a GTP-hydrolysis-dependent molecular chaperone, activating the urease apoprotein by helping to assemble the nickel containing metallocenter of UreC. The UreE protein probably delivers the nickel.

Its subcellular location is the cytoplasm. Its function is as follows. Facilitates the functional incorporation of the urease nickel metallocenter. This process requires GTP hydrolysis, probably effectuated by UreG. This chain is Urease accessory protein UreG, found in Staphylococcus xylosus.